Reading from the N-terminus, the 245-residue chain is Cuticle protein (245 aa).

The 62-residue stretch at 25 to 86 (VSYAAAPALV…TGDSKSQQES (62 aa)) folds into the Chitin-binding type R&amp;R domain. Positions 79 to 100 (DSKSQQESRSGDVVQGSYSVVD) are disordered. 3 repeat units span residues 92 to 95 (VQGS), 108 to 111 (VDYT), and 118 to 121 (FNAV).

Functionally, component of the cuticle of African malaria mosquito. This Anopheles gambiae (African malaria mosquito) protein is Cuticle protein (Ccp84Ab).